The primary structure comprises 268 residues: Undecaprenyl-diphosphatase (268 aa).

The next 7 helical transmembrane spans lie at 47–67 (FAIL…FFKL), 83–103 (FIIG…IAGK), 109–129 (LFDP…LLWV), 144–164 (YPLM…IPGV), 184–204 (AAEF…VYDF), 218–238 (LIAI…KAFL), and 246–266 (FVLF…ALAL).

It belongs to the UppP family.

It localises to the cell inner membrane. The catalysed reaction is di-trans,octa-cis-undecaprenyl diphosphate + H2O = di-trans,octa-cis-undecaprenyl phosphate + phosphate + H(+). Functionally, catalyzes the dephosphorylation of undecaprenyl diphosphate (UPP). Confers resistance to bacitracin. The chain is Undecaprenyl-diphosphatase from Bradyrhizobium sp. (strain ORS 278).